The primary structure comprises 1139 residues: Retinoblastoma-like protein 2 (1139 aa).

Residues 1–45 (MPSGGDQSPPPPPPPPAAAASDEEEEDDGEAEDAAPPAESPTPQI) are disordered. Over residues 8–17 (SPPPPPPPPA) the composition is skewed to pro residues. Acidic residues predominate over residues 21 to 33 (SDEEEEDDGEAED). The residue at position 413 (S413) is a Phosphoserine. T417 bears the Phosphothreonine mark. Residues 417 to 616 (TPVSTATHSL…EKIRDNENRV (200 aa)) are domain A. A pocket; binds E1A region spans residues 417–1024 (TPVSTATHSL…KQIKTFAMKY (608 aa)). S420 carries an O-linked (GlcNAc) serine glycan. A spacer region spans residues 617–827 (PTCEEVMPPQ…KQGQSVTSSS (211 aa)). S639 is subject to Phosphoserine. Position 642 is a phosphothreonine (T642). Residues 654 to 678 (GGLGRSITSPTTLYDRYSSPPASTT) are disordered. Residues S662, S672, and S688 each carry the phosphoserine modification. Low complexity predominate over residues 810–827 (ISPGGQQQKQGQSVTSSS). Disordered regions lie at residues 810-831 (ISPG…NRPR) and 933-999 (KGKR…DMEE). The domain B stretch occupies residues 828 to 1024 (NRPRKTSSLS…KQIKTFAMKY (197 aa)). Residues 941–955 (SGSSDSRSHQNSPTE) show a composition bias toward polar residues. A phosphoserine mark is found at S948, S952, S966, S971, S972, and S973. Positions 964-973 (DSSPVMRSSS) are enriched in low complexity. Position 974 is a phosphothreonine (T974). Positions 977–987 (VPQPSSAPPTP) are enriched in pro residues. Phosphoserine occurs at positions 981 and 982. At T986 the chain carries Phosphothreonine. Residues S1035, S1068, S1080, and S1112 each carry the phosphoserine modification.

The protein belongs to the retinoblastoma protein (RB) family. In terms of assembly, interacts with AATF. Interacts with KMT5B, KMT5C and USP4. Component of the DREAM complex (also named LINC complex) at least composed of E2F4, E2F5, LIN9, LIN37, LIN52, LIN54, MYBL1, MYBL2, RBL1, RBL2, RBBP4, TFDP1 and TFDP2. The complex exists in quiescent cells where it represses cell cycle-dependent genes. It dissociates in S phase when LIN9, LIN37, LIN52 and LIN54 form a subcomplex that binds to MYBL2. Interacts with RINT1. Interacts with PML (isoform PML-1, isoform PML-2, isoform PML-3, isoform PML-4 and isoform PML-5). Interacts with RBBP9. Interacts with CD53. As to quaternary structure, (Microbial infection) Interacts with JC virus small t antigen. Post-translationally, during G0 and early G1 phase of the cell cycle, phosphorylated on Ser-639 and on 5 sites within the domain B. Phosphorylation on Ser-672 in G1 leads to its ubiquitin-dependent proteolysis.

It localises to the nucleus. Functionally, key regulator of entry into cell division. Directly involved in heterochromatin formation by maintaining overall chromatin structure and, in particular, that of constitutive heterochromatin by stabilizing histone methylation. Recruits and targets histone methyltransferases KMT5B and KMT5C, leading to epigenetic transcriptional repression. Controls histone H4 'Lys-20' trimethylation. Probably acts as a transcription repressor by recruiting chromatin-modifying enzymes to promoters. Potent inhibitor of E2F-mediated trans-activation, associates preferentially with E2F5. Binds to cyclins A and E. Binds to and may be involved in the transforming capacity of the adenovirus E1A protein. May act as a tumor suppressor. This Homo sapiens (Human) protein is Retinoblastoma-like protein 2 (RBL2).